A 1000-amino-acid chain; its full sequence is Chloride channel protein D (1000 aa).

Low complexity-rich tracts occupy residues 1–16 and 38–60; these read MSSGNPFDNGNPNDGN and NNNNNNNNNNNNNNNNNNNNSSV. The interval 1–90 is disordered; the sequence is MSSGNPFDNG…SYDDDGDDEE (90 aa). Residues 1–256 are Cytoplasmic-facing; sequence MSSGNPFDNG…LASDHEVLRW (256 aa). Residues 71–80 are compositionally biased toward basic and acidic residues; sequence RIQEEERLTE. The next 10 helical transmembrane spans lie at 257-277, 290-310, 416-436, 442-462, 493-513, 534-554, 678-698, 710-730, 733-753, and 772-792; these read IVSLFMGIFIGVIAYFSHACV, AVLELDLFLAFLTYFLLNTLL, GAGAGVAAAFSAPLGGTLFSL, FWSIALTWRAFFCCMVATYTM, IIPFLLIGVLGGLGGALFTWI, LEVFLIIGLSTCIQFFLPLFF, LGLWPMFLFCIFYLFFAAYTA, MLVIGASYGRFVGLVVYHILG, VSIDPGIYAVMGAAAFMGGVS, and YLLPLMLTVMTAKWVADALIH. 2 consecutive CBS domains span residues 824–881 and 926–984; these read MAKK…ISDV and MNLT…YREL.

Belongs to the chloride channel (TC 2.A.49) family.

The protein resides in the membrane. Voltage-gated chloride channel. Chloride channels may have several functions including the regulation of cell volume, membrane potential stabilization and signal transduction. Required for normal aggregation. This is Chloride channel protein D (clcD) from Dictyostelium discoideum (Social amoeba).